We begin with the raw amino-acid sequence, 734 residues long: Cytoplasmic polyadenylation element-binding protein 3 (734 aa).

Disordered stretches follow at residues M1–P31, G98–N185, and R220–R283. Residues P16 to G26 are compositionally biased toward basic and acidic residues. Composition is skewed to low complexity over residues S121–R140 and K232–S242. Residues P243–Q256 show a composition bias toward basic and acidic residues. Polar residues predominate over residues Y259 to S275. The RRM domain maps to I294–G316. Disordered regions lie at residues K564–S593 and T630–N657. Positions L576–S593 are enriched in low complexity.

Functionally, cytoplasmic polyadenylation element binding protein that binds to and regulates the translation of specific mRNAs. The protein is Cytoplasmic polyadenylation element-binding protein 3 (cpb-3) of Caenorhabditis japonica.